Reading from the N-terminus, the 188-residue chain is Elongation factor P-like protein (188 aa).

This sequence belongs to the elongation factor P family.

The chain is Elongation factor P-like protein from Marinobacter nauticus (strain ATCC 700491 / DSM 11845 / VT8) (Marinobacter aquaeolei).